The following is a 363-amino-acid chain: Neutral protease 2 homolog MEP7 (363 aa).

Positions 1–19 (MLLCSMVAALAALATPAFS) are cleaved as a signal peptide. A propeptide spanning residues 20–181 (CALPHLDLPE…ARAIQPLDRR (162 aa)) is cleaved from the precursor. 2 disulfide bridges follow: Cys-187–Cys-259 and Cys-266–Cys-284. His-308 serves as a coordination point for Zn(2+). Residue Glu-309 is part of the active site. The Zn(2+) site is built by His-312 and Asp-323.

This sequence belongs to the peptidase M35 family. The cofactor is Zn(2+).

It is found in the secreted. It catalyses the reaction Preferential cleavage of bonds with hydrophobic residues in P1'. Also 3-Asn-|-Gln-4 and 8-Gly-|-Ser-9 bonds in insulin B chain.. Secreted metalloproteinase that allows assimilation of proteinaceous substrates. Shows high activities on basic nuclear substrates such as histone and protamine. May be involved in virulence. The protein is Neutral protease 2 homolog MEP7 (MEP7) of Coccidioides posadasii (strain C735) (Valley fever fungus).